We begin with the raw amino-acid sequence, 497 residues long: Probable cytosol aminopeptidase (497 aa).

Positions 263 and 268 each coordinate Mn(2+). Lysine 275 is an active-site residue. Aspartate 286, aspartate 345, and glutamate 347 together coordinate Mn(2+). Arginine 349 is an active-site residue.

The protein belongs to the peptidase M17 family. Requires Mn(2+) as cofactor.

Its subcellular location is the cytoplasm. It carries out the reaction Release of an N-terminal amino acid, Xaa-|-Yaa-, in which Xaa is preferably Leu, but may be other amino acids including Pro although not Arg or Lys, and Yaa may be Pro. Amino acid amides and methyl esters are also readily hydrolyzed, but rates on arylamides are exceedingly low.. It catalyses the reaction Release of an N-terminal amino acid, preferentially leucine, but not glutamic or aspartic acids.. In terms of biological role, presumably involved in the processing and regular turnover of intracellular proteins. Catalyzes the removal of unsubstituted N-terminal amino acids from various peptides. In Rhizobium meliloti (strain 1021) (Ensifer meliloti), this protein is Probable cytosol aminopeptidase.